The primary structure comprises 257 residues: Phosphonates import ATP-binding protein PhnC (257 aa).

In terms of domain architecture, ABC transporter spans I4–I248. G37 to S44 provides a ligand contact to ATP.

It belongs to the ABC transporter superfamily. Phosphonates importer (TC 3.A.1.9.1) family. The complex is composed of two ATP-binding proteins (PhnC), two transmembrane proteins (PhnE) and a solute-binding protein (PhnD).

Its subcellular location is the cell membrane. The catalysed reaction is phosphonate(out) + ATP + H2O = phosphonate(in) + ADP + phosphate + H(+). Part of the ABC transporter complex PhnCDE involved in phosphonates import. Responsible for energy coupling to the transport system. The polypeptide is Phosphonates import ATP-binding protein PhnC (Staphylococcus aureus (strain MRSA252)).